The chain runs to 754 residues: Disintegrin and metalloproteinase domain-containing protein 32 (754 aa).

A signal peptide spans 1-22; sequence MLGAMLHTLLLLLLAELGALLA. Ser23 is subject to Phosphoserine. Residues 23–176 constitute a propeptide that is removed on maturation; the sequence is SGPESQSSFL…TNYGILINKK (154 aa). Asn126 carries N-linked (GlcNAc...) asparagine glycosylation. The Extracellular segment spans residues 177-689; that stretch reads PKSPFKNLFP…ERASKNQEKK (513 aa). Positions 187–384 constitute a Peptidase M12B domain; the sequence is LYLEMSIVVD…EGAKCLQNKP (198 aa). 4 cysteine pairs are disulfide-bonded: Cys296/Cys379, Cys338/Cys363, Cys340/Cys345, and Cys454/Cys475. Residues Asn362, Asn469, Asn570, and Asn571 are each glycosylated (N-linked (GlcNAc...) asparagine). The Disintegrin domain occupies 391 to 483; it reads AAVCGNGKVE…NCPPDVTINN (93 aa). Residues 628-660 enclose the EGF-like domain; the sequence is QSKTCSSKCHGNGVCNSHGVCHCNAGYSPPNCQ. 3 cysteine pairs are disulfide-bonded: Cys632/Cys642, Cys636/Cys648, and Cys650/Cys659. The chain crosses the membrane as a helical span at residues 690-710; the sequence is WLLSLYIVLIILASVFLIGTG. The Cytoplasmic segment spans residues 711–754; the sequence is WKGLKQCGSKEEESMSSESKSEDSTYTYVSRSTSETSSMTSTSS. Residues 720-733 are compositionally biased toward basic and acidic residues; it reads KEEESMSSESKSED. The disordered stretch occupies residues 720–754; sequence KEEESMSSESKSEDSTYTYVSRSTSETSSMTSTSS. Residues 734–754 are compositionally biased toward low complexity; it reads STYTYVSRSTSETSSMTSTSS.

In terms of tissue distribution, expressed in sperm (at protein level). Highly expressed in the testis and weakly expressed in the epididymis, brain and heart.

It localises to the membrane. In terms of biological role, may play a role in sperm development and fertilization This is a non-catalytic metalloprotease-like protein. The protein is Disintegrin and metalloproteinase domain-containing protein 32 of Mus musculus (Mouse).